The primary structure comprises 622 residues: Chaperone protein HscA homolog (622 aa).

It belongs to the heat shock protein 70 family.

Chaperone involved in the maturation of iron-sulfur cluster-containing proteins. Has a low intrinsic ATPase activity which is markedly stimulated by HscB. This is Chaperone protein HscA homolog from Azoarcus sp. (strain BH72).